Consider the following 535-residue polypeptide: Bifunctional purine biosynthesis protein PurH (535 aa).

In terms of domain architecture, MGS-like spans 6 to 151 (TRLPIRRALI…KNHKDVAIVV (146 aa)).

It belongs to the PurH family.

It carries out the reaction (6R)-10-formyltetrahydrofolate + 5-amino-1-(5-phospho-beta-D-ribosyl)imidazole-4-carboxamide = 5-formamido-1-(5-phospho-D-ribosyl)imidazole-4-carboxamide + (6S)-5,6,7,8-tetrahydrofolate. The enzyme catalyses IMP + H2O = 5-formamido-1-(5-phospho-D-ribosyl)imidazole-4-carboxamide. It participates in purine metabolism; IMP biosynthesis via de novo pathway; 5-formamido-1-(5-phospho-D-ribosyl)imidazole-4-carboxamide from 5-amino-1-(5-phospho-D-ribosyl)imidazole-4-carboxamide (10-formyl THF route): step 1/1. The protein operates within purine metabolism; IMP biosynthesis via de novo pathway; IMP from 5-formamido-1-(5-phospho-D-ribosyl)imidazole-4-carboxamide: step 1/1. This chain is Bifunctional purine biosynthesis protein PurH, found in Pseudomonas paraeruginosa (strain DSM 24068 / PA7) (Pseudomonas aeruginosa (strain PA7)).